The sequence spans 76 residues: Conotoxin VnMEKL-012 (76 aa).

An N-terminal signal peptide occupies residues methionine 1 to alanine 18. A propeptide spanning residues leucine 19–alanine 42 is cleaved from the precursor. 3 disulfide bridges follow: cysteine 49/cysteine 65, cysteine 56/cysteine 70, and cysteine 64/cysteine 74.

Belongs to the conotoxin O2 superfamily. Expressed by the venom duct.

It localises to the secreted. This chain is Conotoxin VnMEKL-012, found in Conus ventricosus (Mediterranean cone).